A 168-amino-acid chain; its full sequence is Ribosome-binding factor A (168 aa).

The segment covering 125–138 (RVREGAKHAGDSDP) has biased composition (basic and acidic residues). A disordered region spans residues 125–168 (RVREGAKHAGDSDPYRVLGEGDLEGPATGGPDVEDEGGANSHDR).

Belongs to the RbfA family. Monomer. Binds 30S ribosomal subunits, but not 50S ribosomal subunits or 70S ribosomes.

The protein resides in the cytoplasm. Functionally, one of several proteins that assist in the late maturation steps of the functional core of the 30S ribosomal subunit. Associates with free 30S ribosomal subunits (but not with 30S subunits that are part of 70S ribosomes or polysomes). Required for efficient processing of 16S rRNA. May interact with the 5'-terminal helix region of 16S rRNA. In Mycolicibacterium gilvum (strain PYR-GCK) (Mycobacterium gilvum (strain PYR-GCK)), this protein is Ribosome-binding factor A.